Reading from the N-terminus, the 436-residue chain is MVLPTVAIVGRPNVGKSTLFNRIAGERISIVEDVEGVTRDRIYATGEWLNRQFSLIDTGGIDDVDAPFMEQIKHQAQIAMEEADVIVFVVSGKEGVTDADEYVSKILYRTNTPVILAVNKVDNPEMRNDIYDFYSLGLGDPYPVSSVHGIGTGDVLDAIVENLPVEEAEENDDIIRFSLIGRPNVGKSSLINAILGEDRVIASPVAGTTRDAIDTHFTDADGQEFTMIDTAGMRKSGKIYENTEKYSVMRAMRAIDRSDVVLMVINAEEGIREYDKRIAGFAHEAGKGMIIVVNKWDTLDKDNHTVAKWEADIRDQFQFLTYAPIIFVSALTKQRLNKLPDLIKRISESQNKRIPSAVLNDVIMDAIAINPTPTDKGKRLKIFYATQVSVKPPTFVVFVNEEELMHFSYLRFLENQIRAAFTFEGTPIHLIARKRK.

EngA-type G domains lie at 4–167 (PTVA…PVEE) and 175–351 (IRFS…ESQN). Residues 10–17 (GRPNVGKS), 57–61 (DTGGI), 119–122 (NKVD), 181–188 (GRPNVGKS), 229–233 (DTAGM), and 294–297 (NKWD) each bind GTP. The 85-residue stretch at 352–436 (KRIPSAVLND…PIHLIARKRK (85 aa)) folds into the KH-like domain.

Belongs to the TRAFAC class TrmE-Era-EngA-EngB-Septin-like GTPase superfamily. EngA (Der) GTPase family. Associates with the 50S ribosomal subunit.

Functionally, GTPase that plays an essential role in the late steps of ribosome biogenesis. In Streptococcus pyogenes serotype M2 (strain MGAS10270), this protein is GTPase Der.